The chain runs to 332 residues: Ribose-phosphate pyrophosphokinase (332 aa).

Residue 57–59 (DGE) participates in ATP binding. The Mg(2+) site is built by His-150 and Asp-189. The active site involves Lys-213. D-ribose 5-phosphate is bound by residues Arg-215, Asp-239, and 243–247 (DTAGT).

This sequence belongs to the ribose-phosphate pyrophosphokinase family. Class I subfamily. In terms of assembly, homohexamer. It depends on Mg(2+) as a cofactor.

The protein localises to the cytoplasm. It catalyses the reaction D-ribose 5-phosphate + ATP = 5-phospho-alpha-D-ribose 1-diphosphate + AMP + H(+). The protein operates within metabolic intermediate biosynthesis; 5-phospho-alpha-D-ribose 1-diphosphate biosynthesis; 5-phospho-alpha-D-ribose 1-diphosphate from D-ribose 5-phosphate (route I): step 1/1. Its function is as follows. Involved in the biosynthesis of the central metabolite phospho-alpha-D-ribosyl-1-pyrophosphate (PRPP) via the transfer of pyrophosphoryl group from ATP to 1-hydroxyl of ribose-5-phosphate (Rib-5-P). This chain is Ribose-phosphate pyrophosphokinase, found in Gloeobacter violaceus (strain ATCC 29082 / PCC 7421).